Reading from the N-terminus, the 538-residue chain is MTPAREIGAFNILVFLIFLWLLSKLVGRLGRRGRTTPLRGPANKSLLFGLTRYINVEADDSGAVYESWAAEYGPAFRVPGVLGSHRIVICDAKAIAHFYSKETFGYVQSPRARSTIKNIVGRGLLWSEGESHRRQRKALSPAFSNAAIRRLTSVFFDSSYKMKAAWDSILETNPDNTVIDVQKWMNHISLDSIGIAGFSHDFGSLDGKHSDVAAVFDSFGSINPSYFSMVIFLLALVFPILLKLPTNRNLLVLKLRERTSEIADVLLERTRKEKEGRTGTVEEKSIIGLLIKAESAETELHMSQEEIVAQMNVLLLAGYETTSSKTFLTWALIELSKNPEKQAKLREELLSQYTTTDPTWEQLANGLPYLDSVVHEILRLHPPVGETFRVAAEDDIIPLSRPLVTLSGQTVSSIAIGKGTMVGVPIRCMNRSEVLWGKDAKEFRPERWLEPGFGENNEVQGHRHLLTFIDGPRTCLGRGFALAEFKAVLSVLIRKYAFEFPGPGGAVPKIEKHRSILPRPKVEGQDGAKVPLRVRRVE.

A run of 2 helical transmembrane segments spans residues 7–27 (IGAFNILVFLIFLWLLSKLVG) and 222–242 (INPSYFSMVIFLLALVFPILL). Cysteine 475 is a heme binding site.

Belongs to the cytochrome P450 family. The cofactor is heme.

It localises to the membrane. It functions in the pathway secondary metabolite biosynthesis; terpenoid biosynthesis. Functionally, cytochrome P450 monooxygenase; part of the gene cluster that mediates the biosynthesis of clavilactone A, a meroterpenoid that features a unique benzo-fused ten-membered carbocyclic ring unit with an alpha,beta-epoxy-gamma-lactone moiety, forming an intriguing 10/5/3 tricyclic nested skeleton. Cytochrome P450 monooxygenases claO, claP, claQ, claU, and claW are close orthologs, suggesting that a redundant function or pseudogenes are present in the cla cluster. These monoxygenases are not involved in clavilactone A biosynthesis nor in its modification. ClaR, ClaS and ClaT are sufficient to produce clavilactone A. The biosynthesis begins with the prenyltransferase claS that transfers geranyl pyrophosphate (GPP) to hydroquinone to produces geranylhydroquinone. The cytochrome P450 monooxygenase claR then catalyzes the diradical coupling reaction between the intramolecular hydroquinone and allyl moieties to form the benzo-fused ten-membered carbocyclic ring unit of wigantol. Finally the cytochrome P450 monooxygenase claT exquisitely and stereoselectively assembles the alpha,beta-epoxy-gamma-lactone moiety, producing clavilactone A via arnebinol A. The polypeptide is Cytochrome P450 monooxygenase claO (Ampulloclitocybe clavipes (Club foot)).